The primary structure comprises 145 residues: Bacilliredoxin BLi02578/BL01507 (145 aa).

This sequence belongs to the bacilliredoxin family.

The sequence is that of Bacilliredoxin BLi02578/BL01507 from Bacillus licheniformis (strain ATCC 14580 / DSM 13 / JCM 2505 / CCUG 7422 / NBRC 12200 / NCIMB 9375 / NCTC 10341 / NRRL NRS-1264 / Gibson 46).